Here is a 443-residue protein sequence, read N- to C-terminus: 3-isopropylmalate dehydratase large subunit (443 aa).

Residues Cys347, Cys407, and Cys410 each contribute to the [4Fe-4S] cluster site.

This sequence belongs to the aconitase/IPM isomerase family. LeuC type 1 subfamily. Heterodimer of LeuC and LeuD. The cofactor is [4Fe-4S] cluster.

The enzyme catalyses (2R,3S)-3-isopropylmalate = (2S)-2-isopropylmalate. Its pathway is amino-acid biosynthesis; L-leucine biosynthesis; L-leucine from 3-methyl-2-oxobutanoate: step 2/4. In terms of biological role, catalyzes the isomerization between 2-isopropylmalate and 3-isopropylmalate, via the formation of 2-isopropylmaleate. In Buchnera aphidicola subsp. Uroleucon obscurum, this protein is 3-isopropylmalate dehydratase large subunit.